The primary structure comprises 225 residues: Orotate phosphoribosyltransferase (225 aa).

Residue lysine 32 participates in 5-phospho-alpha-D-ribose 1-diphosphate binding. Phenylalanine 40–phenylalanine 41 is an orotate binding site. 5-phospho-alpha-D-ribose 1-diphosphate-binding positions include tyrosine 78–lysine 79, arginine 104, lysine 105, lysine 108, histidine 110, and aspartate 129–serine 137. The orotate site is built by serine 133 and arginine 161.

This sequence belongs to the purine/pyrimidine phosphoribosyltransferase family. PyrE subfamily. As to quaternary structure, homodimer. Mg(2+) serves as cofactor.

The enzyme catalyses orotidine 5'-phosphate + diphosphate = orotate + 5-phospho-alpha-D-ribose 1-diphosphate. It functions in the pathway pyrimidine metabolism; UMP biosynthesis via de novo pathway; UMP from orotate: step 1/2. In terms of biological role, catalyzes the transfer of a ribosyl phosphate group from 5-phosphoribose 1-diphosphate to orotate, leading to the formation of orotidine monophosphate (OMP). In Cupriavidus metallidurans (strain ATCC 43123 / DSM 2839 / NBRC 102507 / CH34) (Ralstonia metallidurans), this protein is Orotate phosphoribosyltransferase.